Reading from the N-terminus, the 784-residue chain is LPS-assembly protein LptD (784 aa).

Positions 1–24 are cleaved as a signal peptide; sequence MKKRIPTLLATMIATALYSQQGLA. 2 disulfides stabilise this stretch: cysteine 31–cysteine 724 and cysteine 173–cysteine 725.

It belongs to the LptD family. In terms of assembly, component of the lipopolysaccharide transport and assembly complex. Interacts with LptE and LptA. Post-translationally, contains two intramolecular disulfide bonds.

The protein localises to the cell outer membrane. In terms of biological role, together with LptE, is involved in the assembly of lipopolysaccharide (LPS) at the surface of the outer membrane. The polypeptide is LPS-assembly protein LptD (Escherichia coli O6:K15:H31 (strain 536 / UPEC)).